The chain runs to 466 residues: UDP-glycosyltransferase 79 (466 aa).

His27 functions as the Proton acceptor in the catalytic mechanism. Residue His27 coordinates UDP-alpha-D-glucose. Asp120 serves as the catalytic Charge relay. The UDP-alpha-D-glucose site is built by Ser142, Thr291, Phe343, Cys344, His361, Trp364, Asn365, Ser366, Glu369, Asp385, and Gln386. 4 residues coordinate UDP: Thr291, Phe343, Cys344, and His361. UDP is bound by residues Asn365, Ser366, and Glu369.

This sequence belongs to the UDP-glycosyltransferase family.

Functionally, involved in the detoxification of the Fusarium mycotoxin deoxynivalenol by the transfer of glucose from UDP-D-glucose to the hydroxyl group at C-3, forming deoxynivalenol-3-O-beta-D-glucoside. The chain is UDP-glycosyltransferase 79 from Oryza sativa subsp. japonica (Rice).